Here is an 810-residue protein sequence, read N- to C-terminus: Sister chromatid cohesion 1 protein 2 (810 aa).

Disordered stretches follow at residues 200 to 244 (RDTT…LLEP), 273 to 315 (SHES…SECG), and 606 to 626 (MGASSTTSGTAHQTENAAETP). Composition is skewed to basic and acidic residues over residues 220–234 (EPSRDHQNASRHRED) and 273–310 (SHESSGDNLHRDGHTENLESEKTSKKTSCEEMQHDRSL). Over residues 606–622 (MGASSTTSGTAHQTENA) the composition is skewed to polar residues.

It belongs to the rad21 family. As to quaternary structure, component of the cohesin complex. In terms of tissue distribution, low expression in shoots, buds, siliques, leaves and roots. Found in, but not limited to, actively dividing cells: in procambium, protoderm and ground meristem in roots, and in shoot and floral meristems.

The protein resides in the nucleus. Functionally, may be involved in sister chromatid cohesion during mitosis. The sequence is that of Sister chromatid cohesion 1 protein 2 (SYN2) from Arabidopsis thaliana (Mouse-ear cress).